Reading from the N-terminus, the 168-residue chain is Lipoprotein signal peptidase (168 aa).

3 helical membrane-spanning segments follow: residues Trp12–Ala32, Trp67–Leu87, and Asn93–Ile113. Active-site residues include Asp123 and Asp141. Residues Ala136–Phe156 form a helical membrane-spanning segment.

The protein belongs to the peptidase A8 family.

The protein localises to the cell inner membrane. It catalyses the reaction Release of signal peptides from bacterial membrane prolipoproteins. Hydrolyzes -Xaa-Yaa-Zaa-|-(S,diacylglyceryl)Cys-, in which Xaa is hydrophobic (preferably Leu), and Yaa (Ala or Ser) and Zaa (Gly or Ala) have small, neutral side chains.. Its pathway is protein modification; lipoprotein biosynthesis (signal peptide cleavage). In terms of biological role, this protein specifically catalyzes the removal of signal peptides from prolipoproteins. The chain is Lipoprotein signal peptidase from Shewanella amazonensis (strain ATCC BAA-1098 / SB2B).